The chain runs to 323 residues: Ribose 1,5-bisphosphate isomerase (323 aa).

Substrate is bound by residues 22 to 25 and Arg65; that span reads RGAA. Catalysis depends on Cys130, which acts as the Proton acceptor. The active-site Proton donor is Asp199. Residues 209–210 and Lys235 each bind substrate; that span reads NK. A Glycyl lysine isopeptide (Lys-Gly) (interchain with G-Cter in SAMP2) cross-link involves residue Lys210.

This sequence belongs to the eIF-2B alpha/beta/delta subunits family. R15P isomerase subfamily.

It carries out the reaction alpha-D-ribose 1,5-bisphosphate = D-ribulose 1,5-bisphosphate. Catalyzes the isomerization of ribose 1,5-bisphosphate (R15P) to ribulose 1,5-bisphosphate (RuBP), the CO(2) acceptor and substrate for RubisCO. Functions in an archaeal AMP degradation pathway, together with AMP phosphorylase and RubisCO. The chain is Ribose 1,5-bisphosphate isomerase from Haloferax volcanii (strain ATCC 29605 / DSM 3757 / JCM 8879 / NBRC 14742 / NCIMB 2012 / VKM B-1768 / DS2) (Halobacterium volcanii).